The chain runs to 90 residues: MANIKSKIKSITKMQKARARNNAIKSRVKTAIKKAKIAISTDASNKSDLIAKAHSEISKAKSKGVFHKNKANRKISRLNLFANTYTTPAQ.

It belongs to the bacterial ribosomal protein bS20 family.

Its function is as follows. Binds directly to 16S ribosomal RNA. This is Small ribosomal subunit protein bS20 from Mesomycoplasma hyopneumoniae (strain 232) (Mycoplasma hyopneumoniae).